The sequence spans 361 residues: Phosphoserine aminotransferase (361 aa).

R42 is an L-glutamate binding site. Pyridoxal 5'-phosphate is bound by residues 76 to 77 (AT), W102, T152, D172, and Q195. K196 bears the N6-(pyridoxal phosphate)lysine mark. Position 237–238 (237–238 (NT)) interacts with pyridoxal 5'-phosphate.

It belongs to the class-V pyridoxal-phosphate-dependent aminotransferase family. SerC subfamily. In terms of assembly, homodimer. Pyridoxal 5'-phosphate serves as cofactor.

It is found in the cytoplasm. The catalysed reaction is O-phospho-L-serine + 2-oxoglutarate = 3-phosphooxypyruvate + L-glutamate. It catalyses the reaction 4-(phosphooxy)-L-threonine + 2-oxoglutarate = (R)-3-hydroxy-2-oxo-4-phosphooxybutanoate + L-glutamate. Its pathway is amino-acid biosynthesis; L-serine biosynthesis; L-serine from 3-phospho-D-glycerate: step 2/3. It functions in the pathway cofactor biosynthesis; pyridoxine 5'-phosphate biosynthesis; pyridoxine 5'-phosphate from D-erythrose 4-phosphate: step 3/5. Its function is as follows. Catalyzes the reversible conversion of 3-phosphohydroxypyruvate to phosphoserine and of 3-hydroxy-2-oxo-4-phosphonooxybutanoate to phosphohydroxythreonine. The sequence is that of Phosphoserine aminotransferase from Xanthomonas campestris pv. campestris (strain B100).